The sequence spans 61 residues: Small ribosomal subunit protein uS14 (61 aa).

Zn(2+) contacts are provided by C24, C27, C40, and C43.

The protein belongs to the universal ribosomal protein uS14 family. Zinc-binding uS14 subfamily. In terms of assembly, part of the 30S ribosomal subunit. Contacts proteins S3 and S10. Zn(2+) is required as a cofactor.

In terms of biological role, binds 16S rRNA, required for the assembly of 30S particles and may also be responsible for determining the conformation of the 16S rRNA at the A site. In Frankia casuarinae (strain DSM 45818 / CECT 9043 / HFP020203 / CcI3), this protein is Small ribosomal subunit protein uS14.